A 499-amino-acid polypeptide reads, in one-letter code: MTEIRLTNTKSRRKEAFEPIDRKNVRLYVCGPTVYDRAHLGNGRPVVVFDVLFRLLRHVYGEGHVTYVRNFTDVDDKINAAALARKDAGDPRSLEALIRERTDETIRWYHEDMDALGALRPTHEPRATEWIGAMIAMIEDLIAKGHAYEREGHVLFRVRSYRDYGALSGRSVDDMIAGARVEVAPFKEDPMDFVLWKPSDDELPGWDSPWGRGRPGWHIECSAMSYELLGATFDIHAGGIDLQFPHHENEIAQSCCAHPEGGFARVWMHNEMLLVDGRKMSKSLGNFFTVRDLLDQGWPGEVIRMVYLGTHYGRPMDWTAEKAEQAKTTLRNWAEMVEGAAPGEVRAEVVDPLSDDLNTAGALAALSDLYKRKDAAGLLGSAHLLGVDLQAIRHQPWARPYAFEELDGRFLREGIDYQPTVGVIGWGEITDQARETSIGLLHRWLALRRAGDFETADRLKTDAMRLGVELRAQKSPNGVTGGLAKLADRVDVSALEGLL.

A Zn(2+)-binding site is contributed by C30. The short motif at 32-42 (PTVYDRAHLGN) is the 'HIGH' region element. C221, H246, and E250 together coordinate Zn(2+). Positions 279–283 (KMSKS) match the 'KMSKS' region motif. K282 provides a ligand contact to ATP.

Belongs to the class-I aminoacyl-tRNA synthetase family. In terms of assembly, monomer. Zn(2+) serves as cofactor.

Its subcellular location is the cytoplasm. The catalysed reaction is tRNA(Cys) + L-cysteine + ATP = L-cysteinyl-tRNA(Cys) + AMP + diphosphate. In Cereibacter sphaeroides (strain ATCC 17023 / DSM 158 / JCM 6121 / CCUG 31486 / LMG 2827 / NBRC 12203 / NCIMB 8253 / ATH 2.4.1.) (Rhodobacter sphaeroides), this protein is Cysteine--tRNA ligase.